Here is a 92-residue protein sequence, read N- to C-terminus: ATP synthase subunit c (92 aa).

Helical transmembrane passes span 20-40 (GAGL…GTGL) and 71-91 (MAIS…LVFV).

Belongs to the ATPase C chain family. In terms of assembly, F-type ATPases have 2 components, F(1) - the catalytic core - and F(0) - the membrane proton channel. F(1) has five subunits: alpha(3), beta(3), gamma(1), delta(1), epsilon(1). F(0) has three main subunits: a(1), b(2) and c(10-14). The alpha and beta chains form an alternating ring which encloses part of the gamma chain. F(1) is attached to F(0) by a central stalk formed by the gamma and epsilon chains, while a peripheral stalk is formed by the delta and b chains.

It localises to the cell membrane. Functionally, f(1)F(0) ATP synthase produces ATP from ADP in the presence of a proton or sodium gradient. F-type ATPases consist of two structural domains, F(1) containing the extramembraneous catalytic core and F(0) containing the membrane proton channel, linked together by a central stalk and a peripheral stalk. During catalysis, ATP synthesis in the catalytic domain of F(1) is coupled via a rotary mechanism of the central stalk subunits to proton translocation. Key component of the F(0) channel; it plays a direct role in translocation across the membrane. A homomeric c-ring of between 10-14 subunits forms the central stalk rotor element with the F(1) delta and epsilon subunits. This chain is ATP synthase subunit c, found in Mycoplasmopsis pulmonis (strain UAB CTIP) (Mycoplasma pulmonis).